Here is a 639-residue protein sequence, read N- to C-terminus: E3 ubiquitin-protein ligase HEL2 (639 aa).

A disordered region spans residues 1–55 (MSESVKENVTPTRNFRRTQGPQNNTKPHNDRKNFRRKQKKNNLSAEPNLTTSSAD). The residue at position 2 (Ser-2) is an N-acetylserine. Composition is skewed to polar residues over residues 7–26 (ENVT…NNTK) and 43–54 (LSAEPNLTTSSA). The residue at position 57 (Thr-57) is a Phosphothreonine. The segment at 64-104 (CVICARKLTYVSLTPCHHKTCHICGFRQRALYNKKSCLICR) adopts an RING-type zinc-finger fold. One can recognise an LIM zinc-binding domain in the interval 222 to 292 (PMCAFCSGKR…QTCLDNKFVV (71 aa)). Low complexity predominate over residues 343–354 (SISSLPGSSSGS). Disordered stretches follow at residues 343-367 (SISS…PEES) and 550-631 (LESK…GKQK). Position 354 is a phosphoserine (Ser-354).

It belongs to the ZNF598/HEL2 family. As to quaternary structure, interacts with the E2 ubiquitin-conjugating enzyme UBC4. Interacts with histones H3 and H4.

It is found in the cytoplasm. It carries out the reaction S-ubiquitinyl-[E2 ubiquitin-conjugating enzyme]-L-cysteine + [acceptor protein]-L-lysine = [E2 ubiquitin-conjugating enzyme]-L-cysteine + N(6)-ubiquitinyl-[acceptor protein]-L-lysine.. It participates in protein modification; protein ubiquitination. In terms of biological role, E3 ubiquitin-protein ligase that plays a key role in the ribosome quality control (RQC), a pathway that takes place when a ribosome has stalled during translation, leading to degradation of nascent peptide chains. HEL2 is activated when ribosomes are stalled within an mRNA following translation of prematurely polyadenylated mRNAs. Acts as a ribosome collision sensor: specifically recognizes and binds collided ribosome and ubiquitinates the 40S ribosomal proteins RPS20/uS10 and RPS3/uS3. Catalyzes 'Lys-63'-linked polyubiquitination of RPS20/uS10, promoting recruitment of the RQT (ribosome quality control trigger) complex, which drives the disassembly of stalled ribosomes, followed by degradation of nascent peptides. HEL2 also acts as an activator of the No-Go decay (NGD) pathway by mediating polyubiquitination of monoubiquitinated RPS3/uS3 and RPS7/es7: RPS3/uS3 and RPS7/es7 are first monoubiquitinated by MAG2 and MOT2/NOT4, respectively, and HEL2 mediates formation of 'Lys-63'-linked polyubiquitin chains on monoubiquitin, leading to activation of the NGD pathway in a CUE2-mediated endonucleolytic cleavage. Polyubiquitination of RPS3/uS3 also triggers degradation of non-functional 18S rRNA. The RQC pathway and the integrated stress response (ISR) antagonize each other: HEL2 prevents the activation of GCN2, while GCN2 suppresses RQC activation. The RQC pathway functions as a preventive quality control in the secretory pathway: HEL2 binds preferentially to the pre-engaged secretory ribosome-nascent chain complexes and prevents mistargeting of secretory proteins into mitochondria. Independently of its role in RQC, also involved in the polyubiquitination and proteasomal-degradation of excess histone proteins. The sequence is that of E3 ubiquitin-protein ligase HEL2 from Saccharomyces cerevisiae (strain ATCC 204508 / S288c) (Baker's yeast).